The sequence spans 224 residues: UPF0758 protein BLi02933/BL00636 (224 aa).

The region spanning 102–224 is the MPN domain; sequence VIRFPEDAAN…FVSLKEKGYL (123 aa). Positions 173, 175, and 186 each coordinate Zn(2+). Positions 173–186 match the JAMM motif motif; that stretch reads HNHPSGDPAPSRED.

Belongs to the UPF0758 family.

The polypeptide is UPF0758 protein BLi02933/BL00636 (Bacillus licheniformis (strain ATCC 14580 / DSM 13 / JCM 2505 / CCUG 7422 / NBRC 12200 / NCIMB 9375 / NCTC 10341 / NRRL NRS-1264 / Gibson 46)).